The sequence spans 862 residues: Bifunctional uridylyltransferase/uridylyl-removing enzyme (862 aa).

The uridylyltransferase stretch occupies residues 1–328 (MSTAAIPTDA…FPRRAGAAIV (328 aa)). A uridylyl-removing region spans residues 329-685 (INERFQAVRE…ARVSDADQGV (357 aa)). Residues 447-563 (VDQHIMMVLR…GRFADTVGTE (117 aa)) form the HD domain. ACT domains are found at residues 686-765 (QVMV…DRPS) and 794-862 (ILSL…RLHI).

The protein belongs to the GlnD family. Mg(2+) serves as cofactor.

The enzyme catalyses [protein-PII]-L-tyrosine + UTP = [protein-PII]-uridylyl-L-tyrosine + diphosphate. The catalysed reaction is [protein-PII]-uridylyl-L-tyrosine + H2O = [protein-PII]-L-tyrosine + UMP + H(+). Its activity is regulated as follows. Uridylyltransferase (UTase) activity is inhibited by glutamine, while glutamine activates uridylyl-removing (UR) activity. In terms of biological role, modifies, by uridylylation and deuridylylation, the PII regulatory proteins (GlnB and homologs), in response to the nitrogen status of the cell that GlnD senses through the glutamine level. Under low glutamine levels, catalyzes the conversion of the PII proteins and UTP to PII-UMP and PPi, while under higher glutamine levels, GlnD hydrolyzes PII-UMP to PII and UMP (deuridylylation). Thus, controls uridylylation state and activity of the PII proteins, and plays an important role in the regulation of nitrogen assimilation and metabolism. This is Bifunctional uridylyltransferase/uridylyl-removing enzyme from Aromatoleum aromaticum (strain DSM 19018 / LMG 30748 / EbN1) (Azoarcus sp. (strain EbN1)).